The primary structure comprises 177 residues: Late embryogenesis abundant protein 1 (177 aa).

Positions 1 to 177 (MASHDQSYKA…DKDHFPTNRH (177 aa)) are disordered. Positions 28–39 (IEDKAQAAKEKA) are enriched in basic and acidic residues. The span at 40 to 89 (QQAAQTAKDKTSQTAQAAKEKTQQTAQAAKEKTQQTAQAAKDETQQTAQA) shows a compositional bias: low complexity. Tandem repeats lie at residues 53 to 63 (TAQAAKEKTQQ), 64 to 74 (TAQAAKEKTQQ), 75 to 85 (TAQAAKDETQQ), and 86 to 96 (TAQAAKDKTQQ). The tract at residues 53-96 (TAQAAKEKTQQTAQAAKEKTQQTAQAAKDETQQTAQAAKDKTQQ) is 4 X 11 AA approximate tandem repeats of T-A-Q-A-A-K-E-K-T-Q-Q. The span at 90–117 (AKDKTQQTTEATKEKAQDTTGRAREKGS) shows a compositional bias: basic and acidic residues. The segment covering 119 to 142 (MGQSTKETAQSGKDNSAGFLQQTG) has biased composition (polar residues). Over residues 164 to 177 (NDDKDKDHFPTNRH) the composition is skewed to basic and acidic residues.

It belongs to the LEA type 4 family. In terms of tissue distribution, highest expression is found in seeds. No expression detected in adult tissues.

The polypeptide is Late embryogenesis abundant protein 1 (Cicer arietinum (Chickpea)).